The chain runs to 149 residues: Myoglobin (149 aa).

The residue at position 2 (alanine 2) is an N-acetylalanine. The Globin domain occupies 2-143; the sequence is ADWDKVNSVW…ICSDIEKEYK (142 aa). Histidine 89 serves as a coordination point for heme b.

It belongs to the globin family. As to quaternary structure, monomeric.

It is found in the cytoplasm. The protein resides in the sarcoplasm. It carries out the reaction Fe(III)-heme b-[protein] + nitric oxide + H2O = Fe(II)-heme b-[protein] + nitrite + 2 H(+). The catalysed reaction is H2O2 + AH2 = A + 2 H2O. Its function is as follows. Monomeric heme protein which primary function is to store oxygen and facilitate its diffusion within muscle tissues. Reversibly binds oxygen through a pentacoordinated heme iron and enables its timely and efficient release as needed during periods of heightened demand. Depending on the oxidative conditions of tissues and cells, and in addition to its ability to bind oxygen, it also has a nitrite reductase activity whereby it regulates the production of bioactive nitric oxide. Under stress conditions, like hypoxia and anoxia, it also protects cells against reactive oxygen species thanks to its pseudoperoxidase activity. The chain is Myoglobin (mb) from Galeorhinus galeus (Tope shark).